We begin with the raw amino-acid sequence, 309 residues long: Ribonuclease Z (309 aa).

Zn(2+)-binding residues include H63, H65, D67, H68, H145, D216, and H274. Residue D67 is the Proton acceptor of the active site.

The protein belongs to the RNase Z family. As to quaternary structure, homodimer. Requires Zn(2+) as cofactor.

It carries out the reaction Endonucleolytic cleavage of RNA, removing extra 3' nucleotides from tRNA precursor, generating 3' termini of tRNAs. A 3'-hydroxy group is left at the tRNA terminus and a 5'-phosphoryl group is left at the trailer molecule.. Zinc phosphodiesterase, which displays some tRNA 3'-processing endonuclease activity. Probably involved in tRNA maturation, by removing a 3'-trailer from precursor tRNA. In Streptococcus pneumoniae serotype 19F (strain G54), this protein is Ribonuclease Z.